A 315-amino-acid chain; its full sequence is MDSTARKQRGADKTARIPIKIVPAERLKKPEWIRIRLGAGHEAERFNEIKASLREHKLHTVCEEASCPNIHECFGKGTATFMIMGDICTRRCPFCDVGHGRPEPLNANEPQELAATIGAMRLNYVVITSVDRDDLRDGGAQHFVDCIRETRAASPKTRIEVLVPDFRGRLDVALEIFDQAPPDVMNHNLETVPRLYKQARPGADYAYSLRLLKEFKARHPDVPTKSGLMVGLGETDDEILDVLRDLRAHDVEMLTIGQYLQPSTGHLPVLRYVHPDTFKMFETEALAMGFKNAACGPMVRSSYWADQQAYGAGVV.

Residues Cys62, Cys67, Cys73, Cys88, Cys92, Cys95, and Ser302 each contribute to the [4Fe-4S] cluster site. One can recognise a Radical SAM core domain in the interval 74 to 291; it reads FGKGTATFMI…ETEALAMGFK (218 aa).

This sequence belongs to the radical SAM superfamily. Lipoyl synthase family. [4Fe-4S] cluster serves as cofactor.

The protein localises to the cytoplasm. The catalysed reaction is [[Fe-S] cluster scaffold protein carrying a second [4Fe-4S](2+) cluster] + N(6)-octanoyl-L-lysyl-[protein] + 2 oxidized [2Fe-2S]-[ferredoxin] + 2 S-adenosyl-L-methionine + 4 H(+) = [[Fe-S] cluster scaffold protein] + N(6)-[(R)-dihydrolipoyl]-L-lysyl-[protein] + 4 Fe(3+) + 2 hydrogen sulfide + 2 5'-deoxyadenosine + 2 L-methionine + 2 reduced [2Fe-2S]-[ferredoxin]. It functions in the pathway protein modification; protein lipoylation via endogenous pathway; protein N(6)-(lipoyl)lysine from octanoyl-[acyl-carrier-protein]: step 2/2. Its function is as follows. Catalyzes the radical-mediated insertion of two sulfur atoms into the C-6 and C-8 positions of the octanoyl moiety bound to the lipoyl domains of lipoate-dependent enzymes, thereby converting the octanoylated domains into lipoylated derivatives. This is Lipoyl synthase from Aromatoleum aromaticum (strain DSM 19018 / LMG 30748 / EbN1) (Azoarcus sp. (strain EbN1)).